The following is an 885-amino-acid chain: GPI ethanolamine phosphate transferase 2 (885 aa).

N82, N155, and N194 each carry an N-linked (GlcNAc...) asparagine glycan. A helical transmembrane segment spans residues 413–433 (DIYAGALILVITALAVIVVFN). Residue N443 is glycosylated (N-linked (GlcNAc...) asparagine). The next 3 membrane-spanning stretches (helical) occupy residues 447-467 (VMFY…SSLI), 473-493 (IWYF…FDTF), and 495-514 (SLQN…FMRS). An N-linked (GlcNAc...) asparagine glycan is attached at N516. The next 8 membrane-spanning stretches (helical) occupy residues 539-559 (LMWG…YIQG), 581-601 (GLIS…FKLL), 648-668 (IQLS…RVII), 697-717 (ENIP…KLIY), 726-746 (YILT…FCMG), 768-788 (VFLV…FWSL), 820-840 (ILLV…VNLV), and 865-885 (SWIL…VLLF).

Belongs to the PIGG/PIGN/PIGO family. PIGG subfamily.

It localises to the endoplasmic reticulum membrane. It participates in glycolipid biosynthesis; glycosylphosphatidylinositol-anchor biosynthesis. Functionally, ethanolamine phosphate transferase involved in glycosylphosphatidylinositol-anchor biosynthesis. Transfers ethanolamine phosphate to the GPI second mannose. This chain is GPI ethanolamine phosphate transferase 2 (GPI7), found in Candida albicans (strain SC5314 / ATCC MYA-2876) (Yeast).